A 498-amino-acid polypeptide reads, in one-letter code: MTDAFSSSSEAVLQRSVTSTHSFHPSGDLLLLYQTPETCRFITSNHFKKVALQFPDELLPDAVRVSAEIEDKTKAKTYILGDTSYGSCCVDEVAAEHVGADCIVHYGSSCLSPCRRLPLLYVFGKRPIDVHQCASSFKELYPNLQSHIIVLFDVTYSHAIDDLRTLLCDVYPNVVVSRLKTDHSCGAELIQDSCVDLQSNDDGVIFKFGRQFRIKEGQTVNDYSIFYIGQEGLTLTNFMMSWNNCVFSSFNPETSTGRVESVQINKALMKRYYAIERAKDASVVGILVGTLGVANYLIIIEQLKDTIQRAGKKSYMFAMGKINVPKLANFLEIDIYVLVACPENSLLDSSEFYRPVVTPFEMELACNKHREWTGEYVTDFRELLPGGSSHVGFPEPSQSATEEETTDVSLITGALRSCSTNSSEMMHNSETSSLVLRNQTLTVANTNAAASFLAGRSWQGLEPKLGQTPVVKAVKGQRGIAIAYEEEGNEDASTQQKL.

Residues cysteine 89, cysteine 110, and cysteine 341 each coordinate [4Fe-4S] cluster.

It belongs to the DPH1/DPH2 family. DPH2 subfamily. As to quaternary structure, component of the 2-(3-amino-3-carboxypropyl)histidine synthase complex composed of dph1, dph2, dph3 and a NADH-dependent reductase. Requires [4Fe-4S] cluster as cofactor.

Its pathway is protein modification; peptidyl-diphthamide biosynthesis. Functionally, required for the first step of diphthamide biosynthesis, a post-translational modification of histidine which occurs in elongation factor 2. Dph1 and dph2 transfer a 3-amino-3-carboxypropyl (ACP) group from S-adenosyl-L-methionine (SAM) to a histidine residue, the reaction is assisted by a reduction system comprising dph3 and a NADH-dependent reductase. Facilitates the reduction of the catalytic iron-sulfur cluster found in the dph1 subunit. The polypeptide is 2-(3-amino-3-carboxypropyl)histidine synthase subunit 2 (dph2) (Danio rerio (Zebrafish)).